The primary structure comprises 156 residues: Ribosomal RNA large subunit methyltransferase H (156 aa).

S-adenosyl-L-methionine contacts are provided by residues Leu73, Gly104, and 123–128 (LSPLTL).

This sequence belongs to the RNA methyltransferase RlmH family. Homodimer.

The protein localises to the cytoplasm. The catalysed reaction is pseudouridine(1915) in 23S rRNA + S-adenosyl-L-methionine = N(3)-methylpseudouridine(1915) in 23S rRNA + S-adenosyl-L-homocysteine + H(+). In terms of biological role, specifically methylates the pseudouridine at position 1915 (m3Psi1915) in 23S rRNA. The polypeptide is Ribosomal RNA large subunit methyltransferase H (Pseudoalteromonas atlantica (strain T6c / ATCC BAA-1087)).